A 1639-amino-acid polypeptide reads, in one-letter code: RIMS-binding protein 3B (1639 aa).

Disordered stretches follow at residues 1–22 (MAKD…SSPA), 215–240 (GSPD…CHAP), and 295–364 (SLDS…LTPS). The stretch at 21–143 (PAAAVLENQR…ELQRQLAEEL (123 aa)) forms a coiled coil. Residues 326-339 (SPPPSPLPPPPPPS) are compositionally biased toward pro residues. Coiled coils occupy residues 409-442 (QADE…QETN) and 480-619 (LAKD…AEEN). The tract at residues 697 to 811 (CRPGHPPEQP…DRDTASEVDD (115 aa)) is disordered. 2 stretches are compositionally biased toward polar residues: residues 707–718 (WETSQMPESQVK) and 761–775 (SVPQ…SQPL). Residues 776–790 (SKKTSSQSNSSSEGS) are compositionally biased toward low complexity. Residues 832–899 (PKLKIFMAQY…PSNFVEQIPD (68 aa)) form the SH3 1 domain. Fibronectin type-III domains lie at 995 to 1083 (APMQ…TLLA) and 1088 to 1184 (PPLE…IPED). 3 disordered regions span residues 1251–1273 (PRRQ…GAGS), 1292–1325 (QKSP…SPAP), and 1392–1413 (GTER…QALG). Residues 1293-1305 (KSPQNHRPPSVSD) show a composition bias toward polar residues. The span at 1392-1406 (GTERREERREPEPHS) shows a compositional bias: basic and acidic residues. 2 consecutive SH3 domains span residues 1452-1520 (TPAR…EMEV) and 1569-1636 (WTPK…HMSL).

The protein belongs to the RIMBP family. As to quaternary structure, interacts with LRGUK (via guanylate kinase-like domain). Interacts (via C-terminus) with HOOK1 (via coiled-coil region).

The protein localises to the cytoplasm. It localises to the cytoskeleton. Functionally, probable component of the manchette, a microtubule-based structure which plays a key role in sperm head morphogenesis during late stages of sperm development. The protein is RIMS-binding protein 3B (RIMBP3B) of Homo sapiens (Human).